A 458-amino-acid chain; its full sequence is Methionine aminopeptidase 2-2 (458 aa).

The span at 1–14 (MGSKTPERDGHKGQ) shows a compositional bias: basic and acidic residues. Residues 1–93 (MGSKTPERDG…QSSPPRVPLS (93 aa)) are disordered. Residues 67–82 (QKKKRKSKKKGKKKAA) show a composition bias toward basic residues. Substrate is bound at residue His209. Positions 230, 241, and 310 each coordinate a divalent metal cation. His318 is a binding site for substrate. The a divalent metal cation site is built by Glu343 and Glu439.

Belongs to the peptidase M24A family. Methionine aminopeptidase eukaryotic type 2 subfamily. The cofactor is Co(2+). Requires Zn(2+) as cofactor. It depends on Mn(2+) as a cofactor. Fe(2+) is required as a cofactor.

The protein resides in the cytoplasm. It carries out the reaction Release of N-terminal amino acids, preferentially methionine, from peptides and arylamides.. Its function is as follows. Cotranslationally removes the N-terminal methionine from nascent proteins. The N-terminal methionine is often cleaved when the second residue in the primary sequence is small and uncharged (Met-Ala-, Cys, Gly, Pro, Ser, Thr, or Val). This Emericella nidulans (strain FGSC A4 / ATCC 38163 / CBS 112.46 / NRRL 194 / M139) (Aspergillus nidulans) protein is Methionine aminopeptidase 2-2.